The sequence spans 362 residues: Phosphoserine aminotransferase (362 aa).

Arg-43 contacts L-glutamate. Pyridoxal 5'-phosphate contacts are provided by residues 77–78 (AS), Trp-103, Thr-153, Asp-173, and Gln-196. The residue at position 197 (Lys-197) is an N6-(pyridoxal phosphate)lysine. 238 to 239 (NT) is a pyridoxal 5'-phosphate binding site.

Belongs to the class-V pyridoxal-phosphate-dependent aminotransferase family. SerC subfamily. Homodimer. Pyridoxal 5'-phosphate is required as a cofactor.

The protein resides in the cytoplasm. It carries out the reaction O-phospho-L-serine + 2-oxoglutarate = 3-phosphooxypyruvate + L-glutamate. It catalyses the reaction 4-(phosphooxy)-L-threonine + 2-oxoglutarate = (R)-3-hydroxy-2-oxo-4-phosphooxybutanoate + L-glutamate. It functions in the pathway amino-acid biosynthesis; L-serine biosynthesis; L-serine from 3-phospho-D-glycerate: step 2/3. In terms of biological role, catalyzes the reversible conversion of 3-phosphohydroxypyruvate to phosphoserine and of 3-hydroxy-2-oxo-4-phosphonooxybutanoate to phosphohydroxythreonine. The sequence is that of Phosphoserine aminotransferase from Lysinibacillus sphaericus (strain C3-41).